The chain runs to 447 residues: Protein CLT1, chloroplastic (447 aa).

The transit peptide at 1-48 (MATTSSDRLIAGLTASIGSIESRYANPAQSVSLICRNQINGAPPIVLR) directs the protein to the chloroplast. A run of 10 helical transmembrane segments spans residues 103–123 (MEIV…RVLY), 135–155 (FFLA…ILYF), 172–192 (LPFL…MAAA), 200–220 (TTVL…IFLG), 228–248 (ILGC…GSGA), 256–276 (GILW…DTVM), 304–324 (IFQV…WGIP), 351–371 (GAPL…ISLL), 387–407 (TVSV…LGVA), and 413–433 (GFVA…WTPS).

It belongs to the CRT-like transporter family.

The protein resides in the plastid. Its subcellular location is the chloroplast membrane. Involved in thiol transport from the plastid to the cytosol. Transports probably both glutathione (GSH) and its precursor, gamma-glutamylcysteine (gamma-EC). Exhibits some functional redundancy with CLT3 in maintaining the root GSH pool. The polypeptide is Protein CLT1, chloroplastic (Arabidopsis thaliana (Mouse-ear cress)).